Consider the following 62-residue polypeptide: Photosystem II reaction center protein Z (62 aa).

2 consecutive transmembrane segments (helical) span residues 8–28 (AVFA…VVFA) and 41–61 (FSGT…NSLI).

This sequence belongs to the PsbZ family. In terms of assembly, PSII is composed of 1 copy each of membrane proteins PsbA, PsbB, PsbC, PsbD, PsbE, PsbF, PsbH, PsbI, PsbJ, PsbK, PsbL, PsbM, PsbT, PsbY, PsbZ, Psb30/Ycf12, at least 3 peripheral proteins of the oxygen-evolving complex and a large number of cofactors. It forms dimeric complexes.

The protein resides in the plastid. It localises to the chloroplast thylakoid membrane. Functionally, may control the interaction of photosystem II (PSII) cores with the light-harvesting antenna, regulates electron flow through the 2 photosystem reaction centers. PSII is a light-driven water plastoquinone oxidoreductase, using light energy to abstract electrons from H(2)O, generating a proton gradient subsequently used for ATP formation. The chain is Photosystem II reaction center protein Z from Morus indica (Mulberry).